The following is a 490-amino-acid chain: Cytochrome P450 71B28 (490 aa).

The helical transmembrane segment at 1–21 threads the bilayer; the sequence is MSVFLCFLCLLPLILIFLKNL. Cysteine 440 is a heme binding site.

The protein belongs to the cytochrome P450 family. Heme is required as a cofactor.

It is found in the membrane. This chain is Cytochrome P450 71B28 (CYP71B28), found in Arabidopsis thaliana (Mouse-ear cress).